Reading from the N-terminus, the 162-residue chain is CASP-like protein 1C2 (162 aa).

At 1–6 (MMKPKR) the chain is on the cytoplasmic side. The chain crosses the membrane as a helical span at residues 7-27 (LLSLLLRLIAVGATLAAVIIM). Residues 28 to 49 (ATSHEKGTFFAVSYEAKYTDTP) lie on the Extracellular side of the membrane. Residues 50-70 (AFKYFVIANAIVTVYGFLVLF) traverse the membrane as a helical segment. Over 71–79 (HPPGSPLWR) the chain is Cytoplasmic. A helical membrane pass occupies residues 80–100 (LVLALDLVFTMLLISSISAAL). At 101-130 (AVAQVGKNGNSRAGWLPVCGQVTKYCNQVT) the chain is on the extracellular side. The helical transmembrane segment at 131-151 (GALVAGLIALITYIILLLHSI) threads the bilayer. Residues 152 to 162 (YTFLNPLLEKA) lie on the Cytoplasmic side of the membrane.

Belongs to the Casparian strip membrane proteins (CASP) family. In terms of assembly, homodimer and heterodimers.

The protein localises to the cell membrane. The protein is CASP-like protein 1C2 of Populus trichocarpa (Western balsam poplar).